A 138-amino-acid chain; its full sequence is MRTLWIVAVLLLGVEGSLVQFEMMIIKVAKRSGLFWYGAYGCYCGWGGQGRPQDATDRCCFVHDCCYGKATDCNPKTVSYTYSVKNGEIICEDDDPCKKQVCECDRVAAVCFRDNIPSYNNNYKRFPAENCREEPEPC.

Positions 1–16 are cleaved as a signal peptide; it reads MRTLWIVAVLLLGVEG. 7 disulfide bridges follow: Cys-42–Cys-131, Cys-44–Cys-60, Cys-59–Cys-111, Cys-65–Cys-138, Cys-66–Cys-104, Cys-73–Cys-97, and Cys-91–Cys-102. Residues Tyr-43, Gly-45, and Gly-47 each contribute to the Ca(2+) site. His-63 is a catalytic residue. Residue Asp-64 participates in Ca(2+) binding. Residue Asp-105 is part of the active site.

Requires Ca(2+) as cofactor. Expressed by the venom gland.

It localises to the secreted. It catalyses the reaction a 1,2-diacyl-sn-glycero-3-phosphocholine + H2O = a 1-acyl-sn-glycero-3-phosphocholine + a fatty acid + H(+). Functionally, snake venom phospholipase A2 (PLA2) that shows very low inhibition of ADP-induced platelet aggregation in platelet-rich plasma of human, rabbit and guinea pig. In vivo, shows efficient edema-inducing activities in rat paws. PLA2 catalyzes the calcium-dependent hydrolysis of the 2-acyl groups in 3-sn-phosphoglycerides. The polypeptide is Acidic phospholipase A2 Cvv-E6f (Crotalus viridis viridis (Prairie rattlesnake)).